The following is a 390-amino-acid chain: Heparan sulfate glucosamine 3-O-sulfotransferase 3B1 (390 aa).

Residues 1–25 (MGQRLSGGRSCLDVPGRFLPQPPPP) are disordered. At 1-32 (MGQRLSGGRSCLDVPGRFLPQPPPPPPPVRRK) the chain is on the cytoplasmic side. A helical; Signal-anchor for type II membrane protein transmembrane segment spans residues 33 to 53 (LALLFAMLCIWLYMFLYSCAG). Residues 54–390 (SCTAAPGLLL…QMTGRDFGWD (337 aa)) are Lumenal-facing. The interval 79-125 (TAPNETSPKMPFRAPPANSLAAGKDKTVGAGSQEEQSPEAPDSPSPI) is disordered. A glycan (N-linked (GlcNAc...) asparagine) is linked at N82. 147–151 (KGGTR) serves as a coordination point for 3'-phosphoadenylyl sulfate. Substrate contacts are provided by residues 169-175 (EPHFFDR) and 200-203 (KTPS). Residues R228 and S236 each coordinate 3'-phosphoadenylyl sulfate. An N-linked (GlcNAc...) asparagine glycan is attached at N258. 268 to 269 (WS) contacts substrate. N329 carries an N-linked (GlcNAc...) asparagine glycan. C336 and C348 are disulfide-bonded. 353–357 (KGRAH) is a binding site for 3'-phosphoadenylyl sulfate.

It belongs to the sulfotransferase 1 family.

Its subcellular location is the golgi apparatus membrane. The enzyme catalyses alpha-D-glucosaminyl-[heparan sulfate](n) + 3'-phosphoadenylyl sulfate = 3-sulfo-alpha-D-glucosaminyl-[heparan sulfate](n) + adenosine 3',5'-bisphosphate + H(+). Sulfotransferase that utilizes 3'-phospho-5'-adenylyl sulfate (PAPS) to catalyze the transfer of a sulfo group to an N-unsubstituted glucosamine linked to a 2-O-sulfo iduronic acid unit on heparan sulfate. Catalyzes the O-sulfation of glucosamine in IdoUA2S-GlcNS and also in IdoUA2S-GlcNH2. Unlike HS3ST1/3-OST-1, does not convert non-anticoagulant heparan sulfate to anticoagulant heparan sulfate. This chain is Heparan sulfate glucosamine 3-O-sulfotransferase 3B1 (Hs3st3b1), found in Mus musculus (Mouse).